The chain runs to 148 residues: Snaclec 3 (148 aa).

Positions 1–23 (MGRFISVSFGLLVVFLSLSGTEA) are cleaved as a signal peptide. Intrachain disulfides connect Cys-27-Cys-38, Cys-55-Cys-144, and Cys-121-Cys-136. In terms of domain architecture, C-type lectin spans 34–145 (YDQNCYKVFT…CSSTHNFVCK (112 aa)).

Belongs to the snaclec family. As to quaternary structure, heterodimer; disulfide-linked.

It localises to the secreted. Functionally, interferes with one step of hemostasis (modulation of platelet aggregation, or coagulation cascade, for example). This chain is Snaclec 3, found in Daboia siamensis (Eastern Russel's viper).